The primary structure comprises 180 residues: Large ribosomal subunit protein uL5 (180 aa).

Belongs to the universal ribosomal protein uL5 family. Part of the 50S ribosomal subunit; part of the 5S rRNA/L5/L18/L25 subcomplex. Contacts the 5S rRNA and the P site tRNA. Forms a bridge to the 30S subunit in the 70S ribosome.

Functionally, this is one of the proteins that bind and probably mediate the attachment of the 5S RNA into the large ribosomal subunit, where it forms part of the central protuberance. In the 70S ribosome it contacts protein S13 of the 30S subunit (bridge B1b), connecting the 2 subunits; this bridge is implicated in subunit movement. Contacts the P site tRNA; the 5S rRNA and some of its associated proteins might help stabilize positioning of ribosome-bound tRNAs. This Chloroflexus aurantiacus (strain ATCC 29364 / DSM 637 / Y-400-fl) protein is Large ribosomal subunit protein uL5.